The sequence spans 155 residues: MRKNRATKREILPDPVYNSRLVTKAINAIMLEGKKGLAQQIVYQSFDLIKKKTNEDGIEVFKKALENIMPSLELRVRRVAGSNFQVPTVVSKERKQTLGLRWLILSARKRNEKSMIEKLAAEIIDASKGTGAAFKKKEDTHKMAEANKAFAHLRF.

The protein belongs to the universal ribosomal protein uS7 family. Part of the 30S ribosomal subunit. Contacts proteins S9 and S11.

Functionally, one of the primary rRNA binding proteins, it binds directly to 16S rRNA where it nucleates assembly of the head domain of the 30S subunit. Is located at the subunit interface close to the decoding center, probably blocks exit of the E-site tRNA. This is Small ribosomal subunit protein uS7 from Malacoplasma penetrans (strain HF-2) (Mycoplasma penetrans).